Consider the following 453-residue polypeptide: tRNA modification GTPase MnmE (453 aa).

3 residues coordinate (6S)-5-formyl-5,6,7,8-tetrahydrofolate: Arg22, Glu79, and Lys119. The region spanning 215–376 (GMKVVIAGRP…LRNHLKECMG (162 aa)) is the TrmE-type G domain. Position 225 (Asn225) interacts with K(+). GTP contacts are provided by residues 225–230 (NAGKSS), 244–250 (TDIAGTT), 269–272 (DTAG), and 334–337 (NKAD). Ser229 contributes to the Mg(2+) binding site. Positions 244, 246, and 249 each coordinate K(+). Thr250 serves as a coordination point for Mg(2+). Lys453 is a (6S)-5-formyl-5,6,7,8-tetrahydrofolate binding site.

Belongs to the TRAFAC class TrmE-Era-EngA-EngB-Septin-like GTPase superfamily. TrmE GTPase family. Homodimer. Heterotetramer of two MnmE and two MnmG subunits. Requires K(+) as cofactor.

It is found in the cytoplasm. In terms of biological role, exhibits a very high intrinsic GTPase hydrolysis rate. Involved in the addition of a carboxymethylaminomethyl (cmnm) group at the wobble position (U34) of certain tRNAs, forming tRNA-cmnm(5)s(2)U34. This Vibrio vulnificus (strain CMCP6) protein is tRNA modification GTPase MnmE.